Consider the following 422-residue polypeptide: F-box/FBD/LRR-repeat protein At5g56420 (422 aa).

Positions 5 to 54 (RDRLSQLPDDFLLQILSWLPTKDVLVTSLLSKRWRFLWTLVPRLNYDLRL) constitute an F-box domain. LRR repeat units lie at residues 59 to 85 (CPRF…NIKI), 136 to 163 (VLKL…HLLD), 164 to 189 (VKYL…VVQR), 193 to 212 (DNVK…SLHK), 214 to 238 (SQAF…DIED), 279 to 304 (LCLI…ELCT), and 305 to 330 (CAPR…KLRQ). The FBD domain occupies 342 to 391 (SWKQPALPKCLLFHLETFKWELYEGSQKQKEVATFILKHAIRLKTAIISP).

In Arabidopsis thaliana (Mouse-ear cress), this protein is F-box/FBD/LRR-repeat protein At5g56420.